Consider the following 483-residue polypeptide: Glutamyl-tRNA(Gln) amidotransferase subunit A (483 aa).

Active-site charge relay system residues include lysine 76 and serine 151. Catalysis depends on serine 175, which acts as the Acyl-ester intermediate.

The protein belongs to the amidase family. GatA subfamily. In terms of assembly, heterotrimer of A, B and C subunits.

The catalysed reaction is L-glutamyl-tRNA(Gln) + L-glutamine + ATP + H2O = L-glutaminyl-tRNA(Gln) + L-glutamate + ADP + phosphate + H(+). Functionally, allows the formation of correctly charged Gln-tRNA(Gln) through the transamidation of misacylated Glu-tRNA(Gln) in organisms which lack glutaminyl-tRNA synthetase. The reaction takes place in the presence of glutamine and ATP through an activated gamma-phospho-Glu-tRNA(Gln). This Pseudomonas putida (strain GB-1) protein is Glutamyl-tRNA(Gln) amidotransferase subunit A.